Reading from the N-terminus, the 387-residue chain is BTB and MATH domain-containing protein 38 (387 aa).

Positions 79-204 (EGMLKLEIPN…NEMVTVTARV (126 aa)) constitute an MATH domain. One can recognise a BTB domain in the interval 228–295 (CDMTLVINKQ…IYPCHKPITS (68 aa)).

In Caenorhabditis elegans, this protein is BTB and MATH domain-containing protein 38 (bath-38).